The following is a 286-amino-acid chain: 2-oxoglutarate synthase subunit KorB (286 aa).

Heterotetramer of the KorA, KorB, KorC and KorD subunits.

It carries out the reaction 2 oxidized [2Fe-2S]-[ferredoxin] + 2-oxoglutarate + CoA = succinyl-CoA + 2 reduced [2Fe-2S]-[ferredoxin] + CO2 + H(+). The chain is 2-oxoglutarate synthase subunit KorB (korB) from Methanothermobacter thermautotrophicus (strain ATCC 29096 / DSM 1053 / JCM 10044 / NBRC 100330 / Delta H) (Methanobacterium thermoautotrophicum).